A 647-amino-acid polypeptide reads, in one-letter code: uncharacterized protein (647 aa).

This is an uncharacterized protein from Cryphonectria parasitica mycoreovirus 1 (strain 9B21) (CpMYRV-1).